The sequence spans 445 residues: 3-phosphoshikimate 1-carboxyvinyltransferase (445 aa).

Lysine 34, serine 35, and arginine 39 together coordinate 3-phosphoshikimate. Residue lysine 34 participates in phosphoenolpyruvate binding. Phosphoenolpyruvate is bound by residues glycine 112 and arginine 140. 3-phosphoshikimate-binding residues include serine 186, serine 187, glutamine 188, serine 216, glutamate 331, and histidine 358. Glutamine 188 provides a ligand contact to phosphoenolpyruvate. Glutamate 331 functions as the Proton acceptor in the catalytic mechanism. Positions 362, 403, and 428 each coordinate phosphoenolpyruvate.

The protein belongs to the EPSP synthase family. Monomer.

The protein localises to the cytoplasm. It carries out the reaction 3-phosphoshikimate + phosphoenolpyruvate = 5-O-(1-carboxyvinyl)-3-phosphoshikimate + phosphate. Its pathway is metabolic intermediate biosynthesis; chorismate biosynthesis; chorismate from D-erythrose 4-phosphate and phosphoenolpyruvate: step 6/7. Catalyzes the transfer of the enolpyruvyl moiety of phosphoenolpyruvate (PEP) to the 5-hydroxyl of shikimate-3-phosphate (S3P) to produce enolpyruvyl shikimate-3-phosphate and inorganic phosphate. The protein is 3-phosphoshikimate 1-carboxyvinyltransferase of Kocuria rhizophila (strain ATCC 9341 / DSM 348 / NBRC 103217 / DC2201).